The following is a 610-amino-acid chain: Calmegin (610 aa).

Residues 1 to 19 (MHFQAFWLCLGLLFISINA) form the signal peptide. Over 20–471 (EFMDDDVETE…LMAAAEGHPW (452 aa)) the chain is Lumenal. K128 carries the post-translational modification N6-acetyllysine. C151 and C185 form a disulfide bridge. Residues 258–338 (VPPIKPPKEI…KPDDWNEDTD (81 aa)) form a disordered region. Residues 263–284 (PPKEIEDPNDKKPEEWDERAKI) show a composition bias toward basic and acidic residues. 8 consecutive repeat copies span residues 267–280 (IEDPNDKKPEEWDE), 284–297 (IPDPSAVKPEDWDE), 303–316 (IEDSSVVKPAGWLD), 322–335 (IPDPNAEKPDDWNE), 339–352 (GEWEAPQILNPACR), 356–369 (GEWKPPMIDNPKYK), 370–383 (GVWRPPLVDNPNYQ), and 384–397 (GIWSPRKIPNPDYF). Residues 317 to 332 (DEPKFIPDPNAEKPDD) are compositionally biased toward basic and acidic residues. An interaction with PPIB region spans residues 317 to 350 (DEPKFIPDPNAEKPDDWNEDTDGEWEAPQILNPA). C351 and C355 are disulfide-bonded. The helical transmembrane segment at 472-492 (LWLIYLVTAGVPIALITSFCW) threads the bilayer. Over 493–610 (PRKVKKKHKD…SVRKRRVRKD (118 aa)) the chain is Cytoplasmic. Residues 521 to 548 (QEEKEEKAALEKPMDLEEEKKQNDGEML) show a composition bias toward basic and acidic residues. Residues 521 to 610 (QEEKEEKAAL…SVRKRRVRKD (90 aa)) form a disordered region. The span at 549–571 (EKEEESEPEEKSEEEIEIIEGQE) shows a compositional bias: acidic residues. A phosphoserine mark is found at S560, S576, S579, S581, S591, S594, and S601. The segment covering 601-610 (SVRKRRVRKD) has biased composition (basic residues).

This sequence belongs to the calreticulin family. In terms of assembly, interacts with PPIB. Interacts with ADAM2. Interacts with PDILT. In terms of tissue distribution, detected in testis (at protein level). Detected in testis.

Its subcellular location is the endoplasmic reticulum membrane. In terms of biological role, functions during spermatogenesis as a chaperone for a range of client proteins that are important for sperm adhesion onto the egg zona pellucida and for subsequent penetration of the zona pellucida. Required for normal sperm migration from the uterus into the oviduct. Required for normal male fertility. Binds calcium ions. The chain is Calmegin (CLGN) from Homo sapiens (Human).